Consider the following 429-residue polypeptide: Glutamate-1-semialdehyde 2,1-aminomutase 2 (429 aa).

Lysine 268 carries the N6-(pyridoxal phosphate)lysine modification.

The protein belongs to the class-III pyridoxal-phosphate-dependent aminotransferase family. HemL subfamily. As to quaternary structure, homodimer. The cofactor is pyridoxal 5'-phosphate.

Its subcellular location is the cytoplasm. The catalysed reaction is (S)-4-amino-5-oxopentanoate = 5-aminolevulinate. Its pathway is porphyrin-containing compound metabolism; protoporphyrin-IX biosynthesis; 5-aminolevulinate from L-glutamyl-tRNA(Glu): step 2/2. This is Glutamate-1-semialdehyde 2,1-aminomutase 2 from Bacillus cereus (strain AH820).